The following is a 417-amino-acid chain: Calreticulin (417 aa).

The signal sequence occupies residues 1–17; the sequence is MLLSVPLLLGLLGLAAA. Residues 18–197 are N-domain; sequence EPAVYFKEQF…NSQVESGSLE (180 aa). A Ca(2+)-binding site is contributed by Gln26. Lys48 bears the N6-acetyllysine mark. Residues Lys62 and Lys64 each coordinate Ca(2+). The residue at position 64 (Lys64) is an N6-(2-hydroxyisobutyryl)lysine. Cys105 and Cys137 are disulfide-bonded. Residues Tyr109, Lys111, Tyr128, and Asp135 each coordinate an alpha-D-glucoside. At Lys159 the chain carries N6-acetyllysine. The 1-1 repeat unit spans residues 191–202; it reads VESGSLEDDWDF. A 4 X approximate repeats region spans residues 191-255; the sequence is VESGSLEDDW…DAKKPEDWDE (65 aa). Residues 193-277 form a disordered region; the sequence is SGSLEDDWDF…NPEYKGEWKP (85 aa). Residues 198–308 are P-domain; that stretch reads DDWDFLPPKK…YSPDANIYAY (111 aa). Residues 207–251 are compositionally biased toward basic and acidic residues; that stretch reads KIKDPDAAKPEDWDERAKIDDPTDSKPEDWDKPEHIPDPDAKKPE. At Lys209 the chain carries N6-acetyllysine. 6 tandem repeats follow at residues 210 to 221, 227 to 238, 244 to 255, 259 to 269, 273 to 283, and 287 to 297. Residues 237 to 270 are interaction with PPIB; the sequence is DKPEHIPDPDAKKPEDWDEEMDGEWEPPVIQNPE. A compositionally biased stretch (acidic residues) spans 252 to 261; it reads DWDEEMDGEW. The segment at 259-297 is 3 X approximate repeats; sequence GEWEPPVIQNPEYKGEWKPRQIDNPDYKGTWIHPEIDNP. The C-domain stretch occupies residues 309 to 417; the sequence is DSFAVLGLDL…TTPGQTKDEL (109 aa). Asp317 is a binding site for an alpha-D-glucoside. Ca(2+) is bound at residue Asp328. The segment at 350–417 is disordered; the sequence is TKASEKQMKD…TTPGQTKDEL (68 aa). Over residues 352 to 379 the composition is skewed to basic and acidic residues; that stretch reads ASEKQMKDKQDEEQRLKEEEEDKKRKEE. Acidic residues predominate over residues 380 to 408; that stretch reads EEAEDKEDEDDRDEDEEDEDEKEEDEEDT. Positions 414 to 417 match the Prevents secretion from ER motif; it reads KDEL.

It belongs to the calreticulin family. In terms of assembly, monomer. Component of an EIF2 complex at least composed of CELF1/CUGBP1, CALR, CALR3, EIF2S1, EIF2S2, HSP90B1 and HSPA5. Interacts with PDIA3/ERp57 and SPACA9. Interacts with TRIM21. Interacts with NR3C1. Interacts with PPIB. Interacts (via P-domain) with PDIA5. Interacts with GABARAP. Interacts with CLCC1.

It localises to the endoplasmic reticulum lumen. Its subcellular location is the cytoplasm. The protein resides in the cytosol. It is found in the cytolytic granule. The protein localises to the secreted. It localises to the extracellular space. Its subcellular location is the extracellular matrix. The protein resides in the cell surface. It is found in the sarcoplasmic reticulum lumen. The protein localises to the cytoplasmic vesicle. It localises to the secretory vesicle. Its subcellular location is the cortical granule. Its function is as follows. Calcium-binding chaperone that promotes folding, oligomeric assembly and quality control in the endoplasmic reticulum (ER) via the calreticulin/calnexin cycle. This lectin interacts transiently with almost all of the monoglucosylated glycoproteins that are synthesized in the ER. Interacts with the DNA-binding domain of NR3C1 and mediates its nuclear export. Involved in maternal gene expression regulation. May participate in oocyte maturation via the regulation of calcium homeostasis. Present in the cortical granules of non-activated oocytes, is exocytosed during the cortical reaction in response to oocyte activation and might participate in the block to polyspermy. In Cricetulus griseus (Chinese hamster), this protein is Calreticulin (CALR).